We begin with the raw amino-acid sequence, 211 residues long: Bcl-2 homologous antagonist/killer (211 aa).

Residues 1-28 form a disordered region; sequence MASGQGPGPPRQECGEPALPSASEEQVA. The residue at position 2 (Ala-2) is an N-acetylalanine. Positions 74-88 match the BH3 motif; that stretch reads VGRQLAIIGDDINRR. A BH1 motif is present at residues 117 to 136; the sequence is SLFESGINWGRVVALLGFGY. Residues Asp-160 and His-164 each coordinate Zn(2+). Residues 169-184 carry the BH2 motif; it reads RWIAQRGGWVAALNLG. The chain crosses the membrane as a helical span at residues 188 to 205; it reads ILNVLVVLGVVLLGQFVV.

Belongs to the Bcl-2 family. As to quaternary structure, homodimer. Formation of the homodimer is zinc-dependent. Forms heterodimers with BCL2 and BCL2L1 isoform Bcl-X(L). Forms heterooligomers with BAX. Interacts with BCL2A1. Interacts with RTL10/BOP. Interacts with VDAC1. Interacts with GIMAP3/IAN4 and GIMAP5/IAN5. In terms of assembly, (Microbial infection) Interacts with vaccinia virus protein F1. (Microbial infection) Interacts with myxoma virus protein M11L. As to quaternary structure, (Microbial infection) Interacts with Epstein-Barr virus protein BALF1. In terms of assembly, (Microbial infection) Interacts with adenovirus protein E1B 19K. Expressed in a wide variety of tissues, with highest levels in the heart and skeletal muscle.

It localises to the mitochondrion outer membrane. Its function is as follows. Plays a role in the mitochondrial apoptotic process. Upon arrival of cell death signals, promotes mitochondrial outer membrane (MOM) permeabilization by oligomerizing to form pores within the MOM. This releases apoptogenic factors into the cytosol, including cytochrome c, promoting the activation of caspase 9 which in turn processes and activates the effector caspases. The protein is Bcl-2 homologous antagonist/killer (BAK1) of Homo sapiens (Human).